The primary structure comprises 499 residues: Lysine--tRNA ligase (499 aa).

2 residues coordinate Mg(2+): glutamate 410 and glutamate 417.

It belongs to the class-II aminoacyl-tRNA synthetase family. Homodimer. The cofactor is Mg(2+).

It is found in the cytoplasm. It carries out the reaction tRNA(Lys) + L-lysine + ATP = L-lysyl-tRNA(Lys) + AMP + diphosphate. This chain is Lysine--tRNA ligase (lysS), found in Bacillus subtilis (strain 168).